The primary structure comprises 329 residues: Acrosin (329 aa).

An N-terminal signal peptide occupies residues 1–17 (MLPTAVLLVLAVSVVAR). Asn-19 carries an N-linked (GlcNAc...) asparagine glycan. 6 cysteine pairs are disulfide-bonded: Cys-22-Cys-152, Cys-26-Cys-160, Cys-71-Cys-87, Cys-175-Cys-244, Cys-207-Cys-223, and Cys-234-Cys-264. The Peptidase S1 domain maps to 40-288 (IIGGQDAAHG…YLNWIASKIG (249 aa)). Active-site charge relay system residues include His-86 and Asp-140. N-linked (GlcNAc...) asparagine glycosylation is present at Asn-208. The active-site Charge relay system is Ser-238.

It belongs to the peptidase S1 family. Heavy chain (catalytic) and a light chain linked by two disulfide bonds. Forms a heterodimer with SERPINA5.

It carries out the reaction Preferential cleavage: Arg-|-Xaa, Lys-|-Xaa.. With respect to regulation, inhibited by SERPINA5. Its function is as follows. Acrosin is the major protease of mammalian spermatozoa. It is a serine protease of trypsin-like cleavage specificity, it is synthesized in a zymogen form, proacrosin and stored in the acrosome. The protein is Acrosin (ACR) of Ovis aries (Sheep).